We begin with the raw amino-acid sequence, 672 residues long: tRNA 5-methylaminomethyl-2-thiouridine biosynthesis bifunctional protein MnmC (672 aa).

The interval 1–243 (MTSITHAELG…KREMIAGCME (243 aa)) is tRNA (mnm(5)s(2)U34)-methyltransferase. The segment at 269 to 672 (IGGGIASAAL…LRKGKAITEL (404 aa)) is FAD-dependent cmnm(5)s(2)U34 oxidoreductase.

It in the N-terminal section; belongs to the methyltransferase superfamily. tRNA (mnm(5)s(2)U34)-methyltransferase family. This sequence in the C-terminal section; belongs to the DAO family. The cofactor is FAD.

Its subcellular location is the cytoplasm. The enzyme catalyses 5-aminomethyl-2-thiouridine(34) in tRNA + S-adenosyl-L-methionine = 5-methylaminomethyl-2-thiouridine(34) in tRNA + S-adenosyl-L-homocysteine + H(+). Its function is as follows. Catalyzes the last two steps in the biosynthesis of 5-methylaminomethyl-2-thiouridine (mnm(5)s(2)U) at the wobble position (U34) in tRNA. Catalyzes the FAD-dependent demodification of cmnm(5)s(2)U34 to nm(5)s(2)U34, followed by the transfer of a methyl group from S-adenosyl-L-methionine to nm(5)s(2)U34, to form mnm(5)s(2)U34. This chain is tRNA 5-methylaminomethyl-2-thiouridine biosynthesis bifunctional protein MnmC, found in Vibrio vulnificus (strain CMCP6).